Here is an 831-residue protein sequence, read N- to C-terminus: Periplasmic nitrate reductase (831 aa).

The segment at residues 1–29 is a signal peptide (tat-type signal); it reads MKVSRRDFIKQTAIAATASVAGIPLGTEA. The 4Fe-4S Mo/W bis-MGD-type domain maps to 41–97; it reads LKWSKAPCRFCGTGCGVTVAVRDNKVVATQGDPQCEVNKGLNCVKGYFLSKIMYGQD. Positions 48, 51, 55, and 83 each coordinate [4Fe-4S] cluster. Mo-bis(molybdopterin guanine dinucleotide)-binding positions include Lys85, Gln152, Asn177, Cys181, 214–221, 245–249, 264–266, Met375, Gln379, Asn485, 511–512, Lys534, Asp561, and 721–730; these read WGSNMAEM, STFTH, QTD, SD, and TGRVLEHWHS. A substrate-binding site is contributed by Trp797. Residues Asn805 and Lys822 each coordinate Mo-bis(molybdopterin guanine dinucleotide).

The protein belongs to the prokaryotic molybdopterin-containing oxidoreductase family. NasA/NapA/NarB subfamily. Component of the periplasmic nitrate reductase NapAB complex composed of NapA and NapB. The cofactor is [4Fe-4S] cluster. Requires Mo-bis(molybdopterin guanine dinucleotide) as cofactor. In terms of processing, predicted to be exported by the Tat system. The position of the signal peptide cleavage has not been experimentally proven.

It localises to the periplasm. The enzyme catalyses 2 Fe(II)-[cytochrome] + nitrate + 2 H(+) = 2 Fe(III)-[cytochrome] + nitrite + H2O. In terms of biological role, catalytic subunit of the periplasmic nitrate reductase complex NapAB. Receives electrons from NapB and catalyzes the reduction of nitrate to nitrite. The protein is Periplasmic nitrate reductase of Cupriavidus pinatubonensis (strain JMP 134 / LMG 1197) (Cupriavidus necator (strain JMP 134)).